Consider the following 283-residue polypeptide: Pantothenate synthetase (283 aa).

An ATP-binding site is contributed by 31–38 (MGALHDGH). Catalysis depends on H38, which acts as the Proton donor. Residue Q62 coordinates (R)-pantoate. Q62 is a binding site for beta-alanine. 148-151 (GKKD) provides a ligand contact to ATP. (R)-pantoate is bound at residue Q154. Residues V177 and 185–188 (KSSR) contribute to the ATP site.

This sequence belongs to the pantothenate synthetase family. In terms of assembly, homodimer.

It is found in the cytoplasm. It carries out the reaction (R)-pantoate + beta-alanine + ATP = (R)-pantothenate + AMP + diphosphate + H(+). It functions in the pathway cofactor biosynthesis; (R)-pantothenate biosynthesis; (R)-pantothenate from (R)-pantoate and beta-alanine: step 1/1. Functionally, catalyzes the condensation of pantoate with beta-alanine in an ATP-dependent reaction via a pantoyl-adenylate intermediate. The sequence is that of Pantothenate synthetase from Staphylococcus aureus (strain USA300).